We begin with the raw amino-acid sequence, 537 residues long: [Pyruvate dehydrogenase [acetyl-transferring]]-phosphatase 1, mitochondrial (537 aa).

The N-terminal 71 residues, 1-71 (MPAPTQLFFP…WWHYTQGRRY (71 aa)), are a transit peptide targeting the mitochondrion. The PPM-type phosphatase domain occupies 109-525 (ILGFDSNQLP…DDITIIVVQF (417 aa)). Mn(2+) is bound by residues D144 and G145. Residue K202 is modified to N6-acetyllysine. Residues D418 and D516 each coordinate Mn(2+).

It belongs to the PP2C family. As to quaternary structure, heterodimer of a catalytic (PDP1) and a regulatory (PDPR) subunit. Requires Mn(2+) as cofactor. Mg(2+) serves as cofactor.

The protein resides in the mitochondrion. It catalyses the reaction O-phospho-L-seryl-[pyruvate dehydrogenase E1 alpha subunit] + H2O = L-seryl-[pyruvate dehydrogenase E1 alpha subunit] + phosphate. Magnesium-dependent and calcium-stimulated. PDP1 activity strongly depends on its Ca(2+)-dependent binding to the lipoyl domain of E2 subunit of component of the pyruvate dehydrogenase complex. Its function is as follows. Mitochondrial enzyme that catalyzes the dephosphorylation and concomitant reactivation of the alpha subunit of the E1 component of the pyruvate dehydrogenase complex (PDC), thereby stimulating the conversion of pyruvate into acetyl-CoA. This chain is [Pyruvate dehydrogenase [acetyl-transferring]]-phosphatase 1, mitochondrial (PDP1), found in Pongo abelii (Sumatran orangutan).